Here is a 508-residue protein sequence, read N- to C-terminus: Pyruvate kinase (508 aa).

Arginine 56 contacts substrate. Residues asparagine 58, serine 60, aspartate 90, and threonine 91 each coordinate K(+). 58–61 (NFSH) is a binding site for ATP. ATP-binding residues include arginine 97 and lysine 185. Glutamate 251 serves as a coordination point for Mg(2+). Positions 274, 275, and 307 each coordinate substrate. Aspartate 275 contributes to the Mg(2+) binding site.

This sequence belongs to the pyruvate kinase family. As to quaternary structure, homotetramer. Mg(2+) serves as cofactor. Requires K(+) as cofactor.

The catalysed reaction is pyruvate + ATP = phosphoenolpyruvate + ADP + H(+). The protein operates within carbohydrate degradation; glycolysis; pyruvate from D-glyceraldehyde 3-phosphate: step 5/5. With respect to regulation, regulated by phosphoenolpyruvate substrate and is allosterically activated by ribose-5-phosphate, AMP and other nucleoside monophosphates but not by fructose-1,6-bisphosphate. This chain is Pyruvate kinase (pyk), found in Mycoplasma pneumoniae (strain ATCC 29342 / M129 / Subtype 1) (Mycoplasmoides pneumoniae).